The primary structure comprises 204 residues: Vacuolar protein-sorting-associated protein 46 (204 aa).

An interaction with VSP24 region spans residues 1–103; that stretch reads MSRNSAAGLE…ASMGQVCKGM (103 aa). Serine 5 carries the phosphoserine modification. 2 coiled-coil regions span residues 9 to 56 and 109 to 129; these read LENT…RIYA and NMNL…FEDL. An interaction with VSP4 region spans residues 104–204; sequence DKALQNMNLQ…LAQRLRALRG (101 aa). Positions 176-204 are interaction with VTA1; sequence NVPEIKAKEVNVDDEKEDKLAQRLRALRG. Over residues 185–196 the composition is skewed to basic and acidic residues; sequence VNVDDEKEDKLA. The tract at residues 185–204 is disordered; that stretch reads VNVDDEKEDKLAQRLRALRG.

This sequence belongs to the SNF7 family. In terms of assembly, self-associates. Interacts with VPS4 and VTA1. Interacts with IST1.

It localises to the endosome membrane. The protein resides in the endomembrane system. Its function is as follows. Class E VPS protein implicated in concentration and sorting of cargo proteins of the multivesicular body (MVB) for incorporation into intralumenal vesicles. The lumenal sequestrated membrane proteins will be targeted into the vacuole after fusion of the endosome with the vacuole. Probably acts as a peripherally associated component of the ESCRT-III complex, which appears to be critical for late steps in MVB sorting, such as membrane invagination and final cargo sorting and recruits late-acting components of the sorting machinery. The MVB pathway requires the sequential function of ESCRT-O, -I,-II and -III complex assemblies. Regulates the membrane association of VPS4. Can stimulate VPS4 ATPase activity directly or via VTA1. This Saccharomyces cerevisiae (strain ATCC 204508 / S288c) (Baker's yeast) protein is Vacuolar protein-sorting-associated protein 46 (DID2).